The following is a 502-amino-acid chain: MVGQRVRTRFAPSPTGYLHVGGLRTALYNFLFAKKMKGDFIIRIEDTDQSRKVEGAQQNLIKTLEWAGIIADESPQHGGSCGPYIQSERLDIYAKHCKQLLEDHHAYYCFATPEELEENRQLQLKQGLQPKYNRKWLPEEMGGTMPESLIRQKLEAGEPYVIRMKVPDYISVWFEDIIRGPIEFDSATIDDQVLMKSDGFPTYHFASVIDDHLMEISHIIRGEEWLSSMPKHLLLYEFFGWEAPKVAHLPLLLNPDRSKLSKRQGDVAVEDYIRKGYSSEAIVNFVALLGWNEGEGCEQEVYSLQELTDKFSLERVGKAGSIFTLDKLKWLEKQYIKNRSVEKLLSVVKPLLLEELEKKPSIMAREQITSDSYLSSVIELMRERVGFEHEFVTFSTYFYFEPESYDEESVKKRWQPNTNELLADFIPQLEALSDFTAENIEAALKAFVEPKGMKNAVLIHPLRIVTSGVGFGPSLYHMLEVLGKETVLRRIRKGLECITMPA.

The 'HIGH' region signature appears at 12 to 22; it reads PSPTGYLHVGG. A 'KMSKS' region motif is present at residues 259-263; sequence KLSKR. Lys-262 contacts ATP.

It belongs to the class-I aminoacyl-tRNA synthetase family. Glutamate--tRNA ligase type 1 subfamily. In terms of assembly, monomer.

It is found in the cytoplasm. It carries out the reaction tRNA(Glu) + L-glutamate + ATP = L-glutamyl-tRNA(Glu) + AMP + diphosphate. Its function is as follows. Catalyzes the attachment of glutamate to tRNA(Glu) in a two-step reaction: glutamate is first activated by ATP to form Glu-AMP and then transferred to the acceptor end of tRNA(Glu). The polypeptide is Glutamate--tRNA ligase (Chlorobium chlorochromatii (strain CaD3)).